Reading from the N-terminus, the 170-residue chain is Protein-lysine myristoyltransferase HlyC (170 aa).

His-23 is an active-site residue. His-151 serves as a coordination point for heme.

The protein belongs to the RTX toxin acyltransferase family. As to quaternary structure, monomer. Proteolytically cleaved by the protease systems ClpAP, ClpXP and FtsH, leading to its degradation.

Its subcellular location is the cytoplasm. It carries out the reaction tetradecanoyl-[ACP] + L-lysyl-[protein] = N(6)-tetradecanoyl-L-lysyl-[protein] + holo-[ACP] + H(+). Its activity is regulated as follows. The acyltransferase activity is inhibited by heme. Its function is as follows. Protein-lysine myristoyltransferase that catalyzes myristoylation of the protoxin (HlyA) at two internal lysine residues, thereby converting it to the active toxin. This is Protein-lysine myristoyltransferase HlyC from Escherichia coli.